The primary structure comprises 546 residues: MSYENLANLIFPNIDKTPEYYFEKYPKRDLKEGAKVLRYAPSPTGFQHIGGVFASLINERLAHQSGGIFYLRIEDTDQKREVEGAIDDTIKTMHNFGMDFDEGITGENSEKGAYAPYKQSQRADIYRAFVKDLLRKGLAYPCFMTSEELEALREKQIAEKLTPGCYGEFAKYRDLSPEEAIKRIEAGESYVIRMKSPGNPEKRVVAHDMIKGEVSFPENLQDVVIIKGDGLPTYHFAHAIDDTLMRTTHVIRGEEWLSSLPIHLQMFEVLGVEAPKYAHIPTIMKMDGSSKRKLSKRKDPESAVSYYSEKGYPSQSVIEYLLNIINSAFEEWRAENPDADYHDYKVELDKMSKSGALFDLVKLNDVSKDVICKMKPEVVYDLYTNWAKEYDKEMYDLVTSKEAMMKEVFNIDKEGPKPRKDFAKWDEVREKIFYFFDELFDKETANDVELPKTLELEEAKRIIEAYEKAYNFNTDKDTWFSDLKEVAVELGYATDRKKYKKNPEEYKGMVSDVAGAVRAALTHRANTPDLYTIMQIMGEEAVRERI.

The short motif at 41–51 is the 'HIGH' region element; it reads PSPTGFQHIGG. The 'KMSKS' region motif lies at 293–297; it reads KLSKR. Position 296 (K296) interacts with ATP.

This sequence belongs to the class-I aminoacyl-tRNA synthetase family. Glutamate--tRNA ligase type 1 subfamily. Monomer.

It is found in the cytoplasm. The catalysed reaction is tRNA(Glu) + L-glutamate + ATP = L-glutamyl-tRNA(Glu) + AMP + diphosphate. Its function is as follows. Catalyzes the attachment of glutamate to tRNA(Glu) in a two-step reaction: glutamate is first activated by ATP to form Glu-AMP and then transferred to the acceptor end of tRNA(Glu). The chain is Glutamate--tRNA ligase from Clostridium perfringens (strain 13 / Type A).